Here is a 75-residue protein sequence, read N- to C-terminus: Small ribosomal subunit protein bS18 (75 aa).

This sequence belongs to the bacterial ribosomal protein bS18 family. Part of the 30S ribosomal subunit. Forms a tight heterodimer with protein bS6.

Functionally, binds as a heterodimer with protein bS6 to the central domain of the 16S rRNA, where it helps stabilize the platform of the 30S subunit. This is Small ribosomal subunit protein bS18 from Shewanella halifaxensis (strain HAW-EB4).